Reading from the N-terminus, the 1231-residue chain is Chromosome-associated kinesin KIF4 (1231 aa).

Residues 9-337 form the Kinesin motor domain; the sequence is PVRVALRCRP…LRYADRARKI (329 aa). 88–95 provides a ligand contact to ATP; it reads GQTGSGKT. The stretch at 351–1000 forms a coiled coil; it reads ELNHLKQQVQ…IKQKLTLLQV (650 aa). Ser395 bears the Phosphoserine mark. Position 800 is a phosphothreonine (Thr800). Ser802, Ser811, and Ser816 each carry phosphoserine. Residues 1001-1231 form a globular region; the sequence is ASKQKPHLTR…GCSPIQEESH (231 aa). The interval 1189–1212 is disordered; the sequence is HPELKSIASESQENKAIGKKKKRA. Phosphoserine is present on residues Ser1224 and Ser1230.

It belongs to the TRAFAC class myosin-kinesin ATPase superfamily. Kinesin family. Chromokinesin subfamily. [2Fe-2S] cluster serves as cofactor. It depends on [4Fe-4S] cluster as a cofactor. In terms of tissue distribution, expressed in pyramidal cells in juvenile hippocampus, granular cells in juvenile cerebellar cortex and in adult spleen.

It is found in the nucleus. The protein resides in the chromosome. Its subcellular location is the cytoplasm. It localises to the cytoskeleton. Its function is as follows. Iron-sulfur (Fe-S) cluster binding motor protein that has a role in chromosome segregation during mitosis. Required for mitotic chromosomal positioning and bipolar spindle stabilization. This is Chromosome-associated kinesin KIF4 (Kif4) from Mus musculus (Mouse).